A 917-amino-acid chain; its full sequence is Transcription factor E2F8 (917 aa).

Residues 1-122 (MSSTLSEGQT…TEQGEEVEKL (122 aa)) form a disordered region. Polar residues-rich tracts occupy residues 16–27 (LSPSKATSTNNK) and 37–48 (PLKNSNKASTSE). Residues 93–103 (IRNREKERAVD) are compositionally biased toward basic and acidic residues. Residues 105–117 (SESENSQETEQGE) are compositionally biased toward acidic residues. Residues 126–195 (RKDKSLGLLC…LAKNRYTWHG (70 aa)) mediate DNA binding. Disordered regions lie at residues 221 to 252 (QIRQ…FEVD), 353 to 386 (PAFK…SRSS), 461 to 497 (EQSA…GMQI), 556 to 615 (VGAN…SVSP), 671 to 698 (LEKE…QPQK), and 813 to 834 (GSVT…PHPG). The segment covering 233–252 (EFDLDGEEKENEEMSSFEVD) has biased composition (acidic residues). A DNA-binding region spans residues 273-359 (RKDKSLRVMS…GRKPAFKWTG (87 aa)). Residues 371 to 386 (ISTTSSAPKPLESRSS) are compositionally biased toward polar residues. Composition is skewed to low complexity over residues 475–488 (SSQS…TSAS) and 568–578 (TSNNQTNQSSS). The segment covering 595 to 605 (EKSSVGSPSKM) has biased composition (polar residues). Polar residues predominate over residues 815-830 (VTPNPHTPEQSSSLQS).

It belongs to the E2F/DP family. Homodimer and heterodimer: mainly forms homodimers and, to a lesser extent, heterodimers with e2f7.

The protein localises to the nucleus. Its function is as follows. Atypical E2F transcription factor that participates in various processes such as angiogenesis and polyploidization of specialized cells. Mainly acts as a transcription repressor that binds DNA independently of DP proteins and specifically recognizes the E2 recognition site 5'-TTTC[CG]CGC-3'. Directly represses transcription of classical E2F transcription factors such as e2f1. Acts as a regulator of S-phase by recognizing and binding the E2-related site 5'-TTCCCGCC-3' and mediating repression of G1/S-regulated genes. Acts as a promoter of sprouting angiogenesis, possibly by acting as a transcription activator and promoting expression of vegfa. In Danio rerio (Zebrafish), this protein is Transcription factor E2F8 (e2f8).